Here is a 1673-residue protein sequence, read N- to C-terminus: NBPF family member NBPF26 (1673 aa).

EGF-like domains are found at residues 24 to 63 (HALQCRDGYEPCVNKGMCVTYHSGTGYCKCPEGFLGEYCQ), 64 to 102 (HRDPCEKNRCQNGGTCVAQAMLGKATCRCASGFTGEDCQ), 105 to 143 (TPHPCFVSRPCLNGGTCHMLSRDTYECTCQVGFTGKECQ), and 144 to 180 (WTDACLSHLCANGSTCTTVANQFSCKCLTGFTGQKCE). 17 disulfides stabilise this stretch: C28–C41, C35–C51, C53–C62, C68–C79, C73–C90, C92–C101, C109–C121, C115–C131, C133–C142, C148–C159, C153–C168, C170–C179, C186–C198, C192–C207, C209–C218, C225–C236, and C230–C246. An EGF-like 5; calcium-binding domain is found at 182–219 (DVNECDIPGHCQHGGTCLNLPGSYQCQCLQGFTGQYCD). Residues 221–258 (LYVPCAHSPCVNGGTCRQTGDFTFECNCLPVPDSTSSA) form the EGF-like 6 domain. Positions 337 to 381 (RQFKEEKLAEQLKQAEELRQYKVLVHSQERELTQLKEKLREGRDA) form a coiled coil. 3 disordered regions span residues 423 to 463 (KLSP…KVPE), 713 to 734 (EKVQKSSAPREMQKAEEKEVPE), and 782 to 828 (WEDA…EGYS). Over residues 427–443 (ENDEDEDEDVQVEEDEK) the composition is skewed to acidic residues. Olduvai domains follow at residues 427–521 (ENDE…NILP), 698–790 (ENDN…HIIP), 791–879 (ENES…ATGP), 882–937 (SREL…VDMD), 938–1029 (EIEK…PSCP), 1032–1104 (SGEL…PSCP), 1107–1162 (SREL…LDVD), 1163–1255 (RIKK…RSKK), 1256–1348 (ERRR…PSCP), 1351–1423 (SREL…PSCP), 1426–1481 (SREL…LDVD), 1482–1574 (RIKK…RSKK), and 1575–1673 (ERRR…IFPQ). A compositionally biased stretch (basic and acidic residues) spans 452–463 (EVQKTEESKVPE). Acidic residues-rich tracts occupy residues 792-801 (NESDDEEEEE) and 812-824 (ESEEEEVPQESWD). The interval 1242 to 1280 (KGKGKKRRGRRSKKERRRGRKEGEEDQNPPCPRLSRELL) is disordered. The span at 1243-1261 (GKGKKRRGRRSKKERRRGR) shows a compositional bias: basic residues. Residues 1561-1594 (KGKGKKRRGRRSKKERRRGRKEGEEDQNPPCPRL) form a disordered region. A compositionally biased stretch (basic residues) spans 1562 to 1580 (GKGKKRRGRRSKKERRRGR).

It belongs to the NBPF family.

It is found in the cytoplasm. In Homo sapiens (Human), this protein is NBPF family member NBPF26.